Consider the following 599-residue polypeptide: Aspartate--tRNA(Asp/Asn) ligase (599 aa).

Position 174 (Glu174) interacts with L-aspartate. An aspartate region spans residues 198 to 201 (QLFK). Arg220 serves as a coordination point for L-aspartate. ATP is bound by residues 220–222 (RDE) and Gln229. Residue His457 participates in L-aspartate binding. Residue Glu491 participates in ATP binding. Arg498 provides a ligand contact to L-aspartate. 543 to 546 (GLDR) is a binding site for ATP.

It belongs to the class-II aminoacyl-tRNA synthetase family. Type 1 subfamily. In terms of assembly, homodimer.

Its subcellular location is the cytoplasm. It carries out the reaction tRNA(Asx) + L-aspartate + ATP = L-aspartyl-tRNA(Asx) + AMP + diphosphate. In terms of biological role, aspartyl-tRNA synthetase with relaxed tRNA specificity since it is able to aspartylate not only its cognate tRNA(Asp) but also tRNA(Asn). Reaction proceeds in two steps: L-aspartate is first activated by ATP to form Asp-AMP and then transferred to the acceptor end of tRNA(Asp/Asn). The sequence is that of Aspartate--tRNA(Asp/Asn) ligase from Paraburkholderia xenovorans (strain LB400).